Reading from the N-terminus, the 613-residue chain is Dihydroxy-acid dehydratase (613 aa).

Mg(2+) is bound at residue Asp-81. Cys-122 is a [2Fe-2S] cluster binding site. The Mg(2+) site is built by Asp-123 and Lys-124. Lys-124 carries the N6-carboxylysine modification. [2Fe-2S] cluster is bound at residue Cys-195. Position 491 (Glu-491) interacts with Mg(2+). Ser-517 (proton acceptor) is an active-site residue.

Belongs to the IlvD/Edd family. Homodimer. [2Fe-2S] cluster is required as a cofactor. It depends on Mg(2+) as a cofactor.

It catalyses the reaction (2R)-2,3-dihydroxy-3-methylbutanoate = 3-methyl-2-oxobutanoate + H2O. The enzyme catalyses (2R,3R)-2,3-dihydroxy-3-methylpentanoate = (S)-3-methyl-2-oxopentanoate + H2O. Its pathway is amino-acid biosynthesis; L-isoleucine biosynthesis; L-isoleucine from 2-oxobutanoate: step 3/4. The protein operates within amino-acid biosynthesis; L-valine biosynthesis; L-valine from pyruvate: step 3/4. In terms of biological role, functions in the biosynthesis of branched-chain amino acids. Catalyzes the dehydration of (2R,3R)-2,3-dihydroxy-3-methylpentanoate (2,3-dihydroxy-3-methylvalerate) into 2-oxo-3-methylpentanoate (2-oxo-3-methylvalerate) and of (2R)-2,3-dihydroxy-3-methylbutanoate (2,3-dihydroxyisovalerate) into 2-oxo-3-methylbutanoate (2-oxoisovalerate), the penultimate precursor to L-isoleucine and L-valine, respectively. The chain is Dihydroxy-acid dehydratase from Aeromonas hydrophila subsp. hydrophila (strain ATCC 7966 / DSM 30187 / BCRC 13018 / CCUG 14551 / JCM 1027 / KCTC 2358 / NCIMB 9240 / NCTC 8049).